The following is a 172-amino-acid chain: Auxin-responsive protein IAA30 (172 aa).

The segment covering 1–18 has biased composition (low complexity); that stretch reads MGRGRSSSSSSIESSCKS. Positions 1–28 are disordered; the sequence is MGRGRSSSSSSIESSCKSNPFGVSSSNT. The EAR-like (transcriptional repression) signature appears at 35–39; the sequence is LRLGL. Residues 82–171 form the PB1 domain; it reads SFYVKVNMEG…RRLKISRAYH (90 aa).

This sequence belongs to the Aux/IAA family. As to quaternary structure, homodimers and heterodimers.

The protein localises to the nucleus. Its function is as follows. Aux/IAA proteins are short-lived transcriptional factors that function as repressors of early auxin response genes at low auxin concentrations. Repression is thought to result from the interaction with auxin response factors (ARFs), proteins that bind to the auxin-responsive promoter element (AuxRE). Formation of heterodimers with ARF proteins may alter their ability to modulate early auxin response genes expression. This is Auxin-responsive protein IAA30 (IAA30) from Arabidopsis thaliana (Mouse-ear cress).